We begin with the raw amino-acid sequence, 95 residues long: Acylphosphatase (95 aa).

The region spanning alanine 7–arginine 94 is the Acylphosphatase-like domain. Catalysis depends on residues arginine 22 and asparagine 40. A compositionally biased stretch (low complexity) spans valine 76 to alanine 88. The segment at valine 76–glycine 95 is disordered.

This sequence belongs to the acylphosphatase family.

The enzyme catalyses an acyl phosphate + H2O = a carboxylate + phosphate + H(+). The chain is Acylphosphatase (acyP) from Rhizobium meliloti (strain 1021) (Ensifer meliloti).